The chain runs to 550 residues: Chaperonin GroEL (550 aa).

Residues 30 to 33, K51, 87 to 91, G415, and D496 each bind ATP; these read TLGP and DGTTT. Residues 526 to 550 form a disordered region; that stretch reads PEDEKMPPMPPGGGMGGMGGMGGMY. Gly residues predominate over residues 537–550; that stretch reads GGGMGGMGGMGGMY.

This sequence belongs to the chaperonin (HSP60) family. In terms of assembly, forms a cylinder of 14 subunits composed of two heptameric rings stacked back-to-back. Interacts with the co-chaperonin GroES.

The protein localises to the cytoplasm. The enzyme catalyses ATP + H2O + a folded polypeptide = ADP + phosphate + an unfolded polypeptide.. In terms of biological role, together with its co-chaperonin GroES, plays an essential role in assisting protein folding. The GroEL-GroES system forms a nano-cage that allows encapsulation of the non-native substrate proteins and provides a physical environment optimized to promote and accelerate protein folding. The polypeptide is Chaperonin GroEL (Chloroherpeton thalassium (strain ATCC 35110 / GB-78)).